The chain runs to 342 residues: Nicotinate-nucleotide--dimethylbenzimidazole phosphoribosyltransferase (342 aa).

Glu-311 serves as the catalytic Proton acceptor.

This sequence belongs to the CobT family.

The catalysed reaction is 5,6-dimethylbenzimidazole + nicotinate beta-D-ribonucleotide = alpha-ribazole 5'-phosphate + nicotinate + H(+). Its pathway is nucleoside biosynthesis; alpha-ribazole biosynthesis; alpha-ribazole from 5,6-dimethylbenzimidazole: step 1/2. Its function is as follows. Catalyzes the synthesis of alpha-ribazole-5'-phosphate from nicotinate mononucleotide (NAMN) and 5,6-dimethylbenzimidazole (DMB). This is Nicotinate-nucleotide--dimethylbenzimidazole phosphoribosyltransferase from Shewanella sediminis (strain HAW-EB3).